Reading from the N-terminus, the 132-residue chain is Small ribosomal subunit protein eS12 (132 aa).

Residue Ala2 is modified to N-acetylalanine. Lys129 is subject to N6-succinyllysine.

The protein belongs to the eukaryotic ribosomal protein eS12 family. As to quaternary structure, part of the small subunit (SSU) processome, composed of more than 70 proteins and the RNA chaperone small nucleolar RNA (snoRNA) U3. Subunit of the 40S ribosomal complex.

It localises to the nucleus. The protein localises to the nucleolus. In terms of biological role, part of the small subunit (SSU) processome, first precursor of the small eukaryotic ribosomal subunit. During the assembly of the SSU processome in the nucleolus, many ribosome biogenesis factors, an RNA chaperone and ribosomal proteins associate with the nascent pre-rRNA and work in concert to generate RNA folding, modifications, rearrangements and cleavage as well as targeted degradation of pre-ribosomal RNA by the RNA exosome. Subunit of the 40S ribosomal complex. The protein is Small ribosomal subunit protein eS12 (Rps12) of Rattus norvegicus (Rat).